A 405-amino-acid chain; its full sequence is Arginine deiminase (405 aa).

Residue C395 is the Amidino-cysteine intermediate of the active site.

The protein belongs to the arginine deiminase family.

The protein localises to the cytoplasm. The catalysed reaction is L-arginine + H2O = L-citrulline + NH4(+). Its pathway is amino-acid degradation; L-arginine degradation via ADI pathway; carbamoyl phosphate from L-arginine: step 1/2. The chain is Arginine deiminase from Rhodococcus opacus (strain B4).